The chain runs to 802 residues: Valine--tRNA ligase (802 aa).

Residues 45-55 (PTISGQLHIGH) carry the 'HIGH' region motif. Positions 524 to 528 (KMSKS) match the 'KMSKS' region motif. Lys-527 contributes to the ATP binding site.

This sequence belongs to the class-I aminoacyl-tRNA synthetase family. ValS type 2 subfamily. Monomer.

It localises to the cytoplasm. It catalyses the reaction tRNA(Val) + L-valine + ATP = L-valyl-tRNA(Val) + AMP + diphosphate. Its function is as follows. Catalyzes the attachment of valine to tRNA(Val). As ValRS can inadvertently accommodate and process structurally similar amino acids such as threonine, to avoid such errors, it has a 'posttransfer' editing activity that hydrolyzes mischarged Thr-tRNA(Val) in a tRNA-dependent manner. This chain is Valine--tRNA ligase, found in Ehrlichia canis (strain Jake).